A 372-amino-acid polypeptide reads, in one-letter code: 4-hydroxy-3-methylbut-2-en-1-yl diphosphate synthase (flavodoxin) (372 aa).

The [4Fe-4S] cluster site is built by Cys270, Cys273, Cys305, and Glu312.

Belongs to the IspG family. [4Fe-4S] cluster is required as a cofactor.

It carries out the reaction (2E)-4-hydroxy-3-methylbut-2-enyl diphosphate + oxidized [flavodoxin] + H2O + 2 H(+) = 2-C-methyl-D-erythritol 2,4-cyclic diphosphate + reduced [flavodoxin]. It participates in isoprenoid biosynthesis; isopentenyl diphosphate biosynthesis via DXP pathway; isopentenyl diphosphate from 1-deoxy-D-xylulose 5-phosphate: step 5/6. In terms of biological role, converts 2C-methyl-D-erythritol 2,4-cyclodiphosphate (ME-2,4cPP) into 1-hydroxy-2-methyl-2-(E)-butenyl 4-diphosphate. This Escherichia coli O9:H4 (strain HS) protein is 4-hydroxy-3-methylbut-2-en-1-yl diphosphate synthase (flavodoxin).